The primary structure comprises 169 residues: tRNA (cytidine(56)-2'-O)-methyltransferase (169 aa).

S-adenosyl-L-methionine contacts are provided by residues Leu-77, 103-107, and 121-128; these read GSEKV and IGNQPHSE.

It belongs to the aTrm56 family. Homodimer.

The protein resides in the cytoplasm. It carries out the reaction cytidine(56) in tRNA + S-adenosyl-L-methionine = 2'-O-methylcytidine(56) in tRNA + S-adenosyl-L-homocysteine + H(+). Its function is as follows. Specifically catalyzes the AdoMet-dependent 2'-O-ribose methylation of cytidine at position 56 in tRNAs. The chain is tRNA (cytidine(56)-2'-O)-methyltransferase from Sulfurisphaera tokodaii (strain DSM 16993 / JCM 10545 / NBRC 100140 / 7) (Sulfolobus tokodaii).